The primary structure comprises 158 residues: Succinate dehydrogenase assembly factor 2, mitochondrial (158 aa).

The transit peptide at 1–23 (MLRQLLATARRLLLPLATPKRCL) directs the protein to the mitochondrion.

Belongs to the SDHAF2 family. Interacts with the flavoprotein subunit within the SDH catalytic dimer.

It localises to the mitochondrion matrix. Its function is as follows. Plays an essential role in the assembly of succinate dehydrogenase (SDH), an enzyme complex (also referred to as respiratory complex II) that is a component of both the tricarboxylic acid (TCA) cycle and the mitochondrial electron transport chain, and which couples the oxidation of succinate to fumarate with the reduction of ubiquinone (coenzyme Q) to ubiquinol. Required for flavinylation (covalent attachment of FAD) of the flavoprotein subunit of the SDH catalytic dimer. The chain is Succinate dehydrogenase assembly factor 2, mitochondrial from Drosophila virilis (Fruit fly).